The chain runs to 440 residues: Thymidine phosphorylase (440 aa).

The protein belongs to the thymidine/pyrimidine-nucleoside phosphorylase family. In terms of assembly, homodimer.

It catalyses the reaction thymidine + phosphate = 2-deoxy-alpha-D-ribose 1-phosphate + thymine. Its pathway is pyrimidine metabolism; dTMP biosynthesis via salvage pathway; dTMP from thymine: step 1/2. The enzymes which catalyze the reversible phosphorolysis of pyrimidine nucleosides are involved in the degradation of these compounds and in their utilization as carbon and energy sources, or in the rescue of pyrimidine bases for nucleotide synthesis. This Salmonella choleraesuis (strain SC-B67) protein is Thymidine phosphorylase.